A 342-amino-acid chain; its full sequence is Serine/threonine-protein kinase-transforming protein mos (342 aa).

One can recognise a Protein kinase domain in the interval 63–338 (VCLMHRLGSG…LLQRDLKAFR (276 aa)). ATP is bound by residues 69-77 (LGSGGFGSV) and lysine 90. Aspartate 198 serves as the catalytic Proton acceptor.

Belongs to the protein kinase superfamily. Ser/Thr protein kinase family.

The catalysed reaction is L-seryl-[protein] + ATP = O-phospho-L-seryl-[protein] + ADP + H(+). The enzyme catalyses L-threonyl-[protein] + ATP = O-phospho-L-threonyl-[protein] + ADP + H(+). This Myeloproliferative sarcoma virus (isolate ts159) protein is Serine/threonine-protein kinase-transforming protein mos (V-MOS).